A 414-amino-acid polypeptide reads, in one-letter code: Esterase FrsA (414 aa).

It belongs to the FrsA family.

The catalysed reaction is a carboxylic ester + H2O = an alcohol + a carboxylate + H(+). In terms of biological role, catalyzes the hydrolysis of esters. The sequence is that of Esterase FrsA from Escherichia coli O6:K15:H31 (strain 536 / UPEC).